A 276-amino-acid polypeptide reads, in one-letter code: Large ribosomal subunit protein uL2 (276 aa).

Residues 226-276 are disordered; the sequence is MNSVDHPHGGGEGKTSGGRHPVSPWGTPTKGYKTRSNKRTDKLILRHRNKG.

It belongs to the universal ribosomal protein uL2 family. In terms of assembly, part of the 50S ribosomal subunit. Forms a bridge to the 30S subunit in the 70S ribosome.

One of the primary rRNA binding proteins. Required for association of the 30S and 50S subunits to form the 70S ribosome, for tRNA binding and peptide bond formation. It has been suggested to have peptidyltransferase activity; this is somewhat controversial. Makes several contacts with the 16S rRNA in the 70S ribosome. The sequence is that of Large ribosomal subunit protein uL2 from Vesicomyosocius okutanii subsp. Calyptogena okutanii (strain HA).